Here is a 502-residue protein sequence, read N- to C-terminus: uncharacterized protein (502 aa).

Low complexity-rich tracts occupy residues 1-10, 28-47, and 155-171; these read MQSTTNNNTN, SNRSAYRSASKSASRSNNLS, and NTEDTNDDNSNSQSVNS. 4 disordered regions span residues 1–57, 155–181, 212–362, and 438–487; these read MQST…VISY, NTEDTNDDNSNSQSVNSRTDSDNLSAR, SLGN…TDKF, and TIDQ…TSNL. The segment covering 212–230 has biased composition (polar residues); the sequence is SLGNSERNSPDRPSTQGDS. Composition is skewed to low complexity over residues 242 to 290 and 309 to 327; these read RNAS…SSRN and SNKNSASRNSASRNSTSIK. Residues 339–348 show a composition bias toward polar residues; sequence QTNKSKNQRG. Low complexity predominate over residues 446 to 460; sequence TSDKNNSTKSNTKYN. Residues 470–487 are compositionally biased toward polar residues; the sequence is SYGTSKRSHNRSSNTSNL.

It is found in the virion. This is an uncharacterized protein from Acanthamoeba polyphaga (Amoeba).